The following is a 592-amino-acid chain: Anaphase-promoting complex subunit 8 (592 aa).

TPR repeat units follow at residues 66–99 (EYYK…QLPI), 160–193 (QQQQ…NKKD), 291–324 (TYIL…EPNR), 359–392 (PETC…NDRY), 393–426 (LSAW…NPRD), 428–460 (RAWY…RPYD), 461–494 (PRMW…YDRE), and 496–528 (VAIN…CDQE). The disordered stretch occupies residues 129–166 (QQQAQQQAQQAQQESQQNDKNNDTNNNNKTDQQQQQQQ).

It belongs to the APC8/CDC23 family. The APC/C is composed of at least 13 subunits that stay tightly associated throughout the cell cycle: anapc1, anapc2, anapc3, anapc4, anapc5, anapc6, anapc7, anapc8, anapc10, anapc11, cdc20, cdc26 and cdh1.

It localises to the nucleus. It functions in the pathway protein modification; protein ubiquitination. Component of the anaphase promoting complex/cyclosome (APC/C), a cell cycle-regulated E3 ubiquitin-protein ligase complex that controls progression through mitosis and the G1 phase of the cell cycle. This is Anaphase-promoting complex subunit 8 (anapc8) from Dictyostelium discoideum (Social amoeba).